The primary structure comprises 130 residues: Small ribosomal subunit protein uS8 (130 aa).

Belongs to the universal ribosomal protein uS8 family. As to quaternary structure, part of the 30S ribosomal subunit. Contacts proteins S5 and S12.

In terms of biological role, one of the primary rRNA binding proteins, it binds directly to 16S rRNA central domain where it helps coordinate assembly of the platform of the 30S subunit. The sequence is that of Small ribosomal subunit protein uS8 from Pseudomonas fluorescens (strain SBW25).